We begin with the raw amino-acid sequence, 859 residues long: Autoinducer 2 sensor kinase/phosphatase LuxQ (859 aa).

2 helical membrane-spanning segments follow: residues 15 to 35 (ATLITKIIILVLAPIILGIFI) and 280 to 300 (IQHILAMLASIIGMIMIALMS). Residues 489 to 711 (KMSHEIRTPI…TFVITLPVKD (223 aa)) enclose the Histidine kinase domain. His-492 carries the phosphohistidine; by autocatalysis modification. Positions 736–851 (KVLLVEDNHT…ALHEAFVDFK (116 aa)) constitute a Response regulatory domain. Asp-785 carries the post-translational modification 4-aspartylphosphate.

Binds the complex formed by AI-2 and LuxP.

The protein localises to the cell inner membrane. The enzyme catalyses ATP + protein L-histidine = ADP + protein N-phospho-L-histidine.. Its function is as follows. At low cell density, in absence of AI-2 (autoinducer 2), LuxQ has a kinase activity and autophosphorylates on a histidine residue. The phosphoryl group is then transferred to an aspartate residue in the response regulator domain. The phosphoryl group is transferred to LuxU, and ultimately to LuxO. At high cell density, in the presence of AI-2, the kinase activity is inactivated, and the response regulator domain has a phosphatase activity. This is Autoinducer 2 sensor kinase/phosphatase LuxQ (luxQ) from Vibrio harveyi (Beneckea harveyi).